Here is a 118-residue protein sequence, read N- to C-terminus: Holo-[acyl-carrier-protein] synthase (118 aa).

Mg(2+) contacts are provided by Asp8 and Glu58.

This sequence belongs to the P-Pant transferase superfamily. AcpS family. Mg(2+) is required as a cofactor.

It is found in the cytoplasm. It carries out the reaction apo-[ACP] + CoA = holo-[ACP] + adenosine 3',5'-bisphosphate + H(+). In terms of biological role, transfers the 4'-phosphopantetheine moiety from coenzyme A to a Ser of acyl-carrier-protein. The chain is Holo-[acyl-carrier-protein] synthase from Streptococcus equi subsp. zooepidemicus (strain H70).